Reading from the N-terminus, the 154-residue chain is MSKKFIITWDAMQTYCRELAEKQMPAEQWKGIWAVSRGGLVPGAILARELGIRYVDTICISSYDHDHQRDMTVLKAPEGDGEGYLIVEDLVDSGDTARKLREMYPKAKMIAVCAKPSGKELLDDYVVDIAQDTWIEQPWDMSIQYAEPVNRKQK.

5-phospho-alpha-D-ribose 1-diphosphate is bound by residues Arg-37–Gly-38, Arg-69, and Glu-88–Thr-96. Arg-69 is a GMP binding site. Asp-89 lines the Mg(2+) pocket. Residues Asp-92 and Ile-135 each contribute to the guanine site. The xanthine site is built by Asp-92 and Ile-135. Residues Asp-92–Thr-96 and Trp-134–Ile-135 each bind GMP.

This sequence belongs to the purine/pyrimidine phosphoribosyltransferase family. XGPT subfamily. As to quaternary structure, homotetramer. Mg(2+) serves as cofactor.

The protein localises to the cell inner membrane. The enzyme catalyses GMP + diphosphate = guanine + 5-phospho-alpha-D-ribose 1-diphosphate. The catalysed reaction is XMP + diphosphate = xanthine + 5-phospho-alpha-D-ribose 1-diphosphate. It catalyses the reaction IMP + diphosphate = hypoxanthine + 5-phospho-alpha-D-ribose 1-diphosphate. It functions in the pathway purine metabolism; GMP biosynthesis via salvage pathway; GMP from guanine: step 1/1. The protein operates within purine metabolism; XMP biosynthesis via salvage pathway; XMP from xanthine: step 1/1. In terms of biological role, purine salvage pathway enzyme that catalyzes the transfer of the ribosyl-5-phosphate group from 5-phospho-alpha-D-ribose 1-diphosphate (PRPP) to the N9 position of the 6-oxopurines guanine and xanthine to form the corresponding ribonucleotides GMP (guanosine 5'-monophosphate) and XMP (xanthosine 5'-monophosphate), with the release of PPi. To a lesser extent, also acts on hypoxanthine. The sequence is that of Xanthine-guanine phosphoribosyltransferase from Vibrio parahaemolyticus serotype O3:K6 (strain RIMD 2210633).